The chain runs to 156 residues: Small ribosomal subunit protein uS7 (156 aa).

It belongs to the universal ribosomal protein uS7 family. In terms of assembly, part of the 30S ribosomal subunit. Contacts proteins S9 and S11.

Functionally, one of the primary rRNA binding proteins, it binds directly to 16S rRNA where it nucleates assembly of the head domain of the 30S subunit. Is located at the subunit interface close to the decoding center, probably blocks exit of the E-site tRNA. The polypeptide is Small ribosomal subunit protein uS7 (Shewanella sp. (strain W3-18-1)).